A 357-amino-acid polypeptide reads, in one-letter code: tRNA-specific 2-thiouridylase MnmA (357 aa).

ATP is bound by residues 6 to 13 (AMSGGVDS) and leucine 32. Cysteine 101 functions as the Nucleophile in the catalytic mechanism. A disulfide bridge connects residues cysteine 101 and cysteine 193. ATP is bound at residue glycine 125. The segment at 143 to 145 (KDQ) is interaction with tRNA. Cysteine 193 functions as the Cysteine persulfide intermediate in the catalytic mechanism.

The protein belongs to the MnmA/TRMU family.

It is found in the cytoplasm. It carries out the reaction S-sulfanyl-L-cysteinyl-[protein] + uridine(34) in tRNA + AH2 + ATP = 2-thiouridine(34) in tRNA + L-cysteinyl-[protein] + A + AMP + diphosphate + H(+). In terms of biological role, catalyzes the 2-thiolation of uridine at the wobble position (U34) of tRNA, leading to the formation of s(2)U34. This is tRNA-specific 2-thiouridylase MnmA from Mycolicibacterium gilvum (strain PYR-GCK) (Mycobacterium gilvum (strain PYR-GCK)).